Reading from the N-terminus, the 443-residue chain is Alpha-amylase (443 aa).

An N-terminal signal peptide occupies residues M1–A24. Residues H114 and R196 each contribute to the substrate site. Catalysis depends on D198, which acts as the Nucleophile. K201 to H202 contacts substrate. Catalysis depends on E223, which acts as the Proton donor. Substrate is bound by residues G228 and H287.

Belongs to the glycosyl hydrolase 13 family.

It localises to the secreted. It carries out the reaction Endohydrolysis of (1-&gt;4)-alpha-D-glucosidic linkages in polysaccharides containing three or more (1-&gt;4)-alpha-linked D-glucose units.. This chain is Alpha-amylase (amyA), found in Aeromonas hydrophila.